A 227-amino-acid polypeptide reads, in one-letter code: N-acetyltransferase 8 (227 aa).

Topologically, residues 1-42 (MAPCHIRKYQESDRQWVVGLLSRGMAEHAPATFRQLLKLPRT) are cytoplasmic. The chain crosses the membrane as a helical; Signal-anchor for type II membrane protein span at residues 43–63 (LILLLGGPLALLLVSGSWLLA). In terms of domain architecture, N-acetyltransferase spans 61–220 (LLALVFSISL…HTVHFIYHLP (160 aa)). The Lumenal portion of the chain corresponds to 64 to 227 (LVFSISLFPA…HLPSSKVGSL (164 aa)).

This sequence belongs to the NAT8 family. In terms of tissue distribution, preferentially expressed in liver and kidney. Also detected in brain (at protein level).

It localises to the endoplasmic reticulum-Golgi intermediate compartment membrane. Its subcellular location is the endoplasmic reticulum membrane. It carries out the reaction L-lysyl-[protein] + acetyl-CoA = N(6)-acetyl-L-lysyl-[protein] + CoA + H(+). The catalysed reaction is an S-substituted L-cysteine + acetyl-CoA = an N-acetyl-L-cysteine-S-conjugate + CoA + H(+). It participates in sulfur metabolism; glutathione metabolism. In terms of biological role, endoplasmic reticulum (ER)-membrane-bound lysine N-acetyltransferase catalyzing the N6-acetylation of lysine residues in the lumen of the ER in various proteins, including PROM1 and BACE1, using acetyl-CoA as acetyl donor. Thereby, may regulate apoptosis through the acetylation and the regulation of the expression of PROM1. May also regulate amyloid beta-peptide secretion through acetylation of BACE1 and the regulation of its expression in neurons. N(6)-lysine acetylation in the ER maintains protein homeostasis and regulates reticulophagy. Alternatively, acetylates the free alpha-amino group of cysteine S-conjugates to form mercapturic acids. This is the final step in a major route for detoxification of a wide variety of reactive electrophiles which starts with their incorporation into glutathione S-conjugates. The glutathione S-conjugates are then further processed into cysteine S-conjugates and finally mercapturic acids which are water soluble and can be readily excreted in urine or bile. The chain is N-acetyltransferase 8 from Homo sapiens (Human).